An 83-amino-acid polypeptide reads, in one-letter code: Mu-theraphotoxin-Hhn2k (83 aa).

Positions 1–21 (MKASMFLALAGLVLLFVVDYA) are cleaved as a signal peptide. Positions 22-48 (SESEEKEFPIELLSKIFAVDVFKGEER) are excised as a propeptide. Intrachain disulfides connect Cys-50–Cys-65, Cys-57–Cys-70, and Cys-64–Cys-77. Leu-81 is subject to Leucine amide.

The protein belongs to the neurotoxin 10 (Hwtx-1) family. 15 (Hntx-3) subfamily. In terms of assembly, monomer. As to expression, expressed by the venom gland.

It is found in the secreted. Its function is as follows. Lethal neurotoxin. Selectively blocks tetrodotoxin-sensitive voltage-gated sodium channels (Nav). Does not affect tetrodotoxin-resistant voltage-gated sodium channels or calcium channels. The sequence is that of Mu-theraphotoxin-Hhn2k from Cyriopagopus hainanus (Chinese bird spider).